Here is a 373-residue protein sequence, read N- to C-terminus: Sorting nexin-21 (373 aa).

The tract at residues 1-107 (MHRGTQEGAM…RSPPPDGQWG (107 aa)) is disordered. The span at 21–37 (ALAGDGPGEAAASPEAE) shows a compositional bias: low complexity. The span at 55-65 (SRLSGTLSFTS) shows a compositional bias: polar residues. The segment covering 66–81 (AEDDEDDEDEDDEEAG) has biased composition (acidic residues). The PX domain maps to 129 to 246 (QRLLFEVTSA…DFFVLPELRR (118 aa)). 4 residues coordinate a 1,2-diacyl-sn-glycero-3-phospho-(1D-myo-inositol-3-phosphate): Arg171, Ser173, Lys198, and Arg212.

The protein belongs to the sorting nexin family. In terms of assembly, monomer. Highly expressed in fetus liver, but only weakly expressed in brain, skeleton muscle, smooth muscle, and cardiac muscle, kidney, and adrenal gland.

It is found in the cytoplasmic vesicle membrane. It localises to the early endosome membrane. Functionally, binds to membranes enriched in phosphatidylinositol 3-phosphate (PtdIns(P3)) and phosphatidylinositol 4,5-bisphosphate. May be involved in several stages of intracellular trafficking. This is Sorting nexin-21 (SNX21) from Homo sapiens (Human).